An 89-amino-acid chain; its full sequence is UPF0237 protein CE1668 (89 aa).

The ACT domain occupies 4-78 (IMTVTGQDHT…KEQGLVIRIQ (75 aa)).

The protein belongs to the UPF0237 family.

In Corynebacterium efficiens (strain DSM 44549 / YS-314 / AJ 12310 / JCM 11189 / NBRC 100395), this protein is UPF0237 protein CE1668.